The primary structure comprises 97 residues: High mobility group protein homolog NHP1 (97 aa).

Positions 1 to 24 are disordered; that stretch reads MAGASDRTGVRRPRKAKKDPNAPK. A DNA-binding region (HMG box) is located at residues 23 to 93; it reads PKRALSSYMF…RYEREKAEYA (71 aa).

The protein localises to the nucleus. In Babesia bovis, this protein is High mobility group protein homolog NHP1.